Reading from the N-terminus, the 1172-residue chain is MGLHLTVPGLRRDGRGVQSNSHDTSSKTTADISRCPQHTDAGLQRAATPGISRLLGISSRSVTLTKPRSATRGNSRYHWVPAAAGWTVGVIATLSLLASVSPLIRWIIKVPREFINDYLFNFPDTNFAWSFVLALLAAALTARKRIAWLVLLANMVLAAVVNAAEIAAGGNTAAESFGENLGFAVHVVAIVVLVLGYREFWAKVRRGALFRAAAVWLAGAVVGIVASWGLVELFPGSLAPDERLGYAANRVVGFALADPDLFTGRPHVFLNAIFGLFGAFALIGAAIVLFLSQRADNALTGEDESAIRGLLDLYGKDDSLGYFATRRDKSVVFASSGRACITYRVEVGVCLASGDPVGDHRAWPQAVDAWLRLCQTYGWAPGVMGASSQGAQTYREAGLTALELGDEAILRPADFKLSGPEMRGVRQAVTRARRAGLTVRIRRHRDIAEDEMAQTITRADSWRDTETERGFSMALGRLGDPADSDCLLVEAIDPHNQVLAMLSLVPWGTTGVSLDLMRRSPQSPNGTIELMVSELALHAESLGITRISLNFAVFRAAFEQGAQLGAGPVARLWRGLLVFFSRWWQLETLYRSNMKYQPEWVPRYACYEDARVIPRVGVASVIAEGFLVLPFSRRNRVHTGHHPAVPERLAATGLLHHDGSAPDVSGLRQVGLTNGDGVERRLPEQVRVRFDKLEKLRSSGIDAFPVGRPPSHTVAQALAADHQASVSVSGRIMRIRNYGGVLFAQLRDWSGEMQVLLDNSRLDQGCAADFNAATDLGDLVEMTGHMGASKTGTPSLIVSGWRLIGKCLRPLPNKWKGLLDPEARVRTRYLDLAVNAESRALITARSSVLRAVRETLFAKGFVEVETPILQQLHGGATARPFVTHINTYSMDLFLRIAPELYLKRLCVGGVERVFELGRAFRNEGVDFSHNPEFTLLEAYQAHAGYLEWIDGCRELIQNAAQAANGAPIAMRPRTDKGSDGTRHHLEPVDISGIWPVRTVHDAISEALGERIDADTGLTTLRKLCDAAGVPYRTQWDAGAVVLELYEHLVECRTEQPTFYIDFPTSVSPLTRPHRSKRGVAERWDLVAWGIELGTAYSELTDPVEQRRRLQEQSLLAAGGDPEAMELDEDFLQAMEYAMPPTGGLGMGIDRVVMLITGRSIRETLPFPLAKPH.

Residues 1 to 34 are disordered; that stretch reads MGLHLTVPGLRRDGRGVQSNSHDTSSKTTADISR. Residues 1-663 form a phosphatidylglycerol lysyltransferase region; the sequence is MGLHLTVPGL…LLHHDGSAPD (663 aa). The segment covering 17–31 has biased composition (polar residues); sequence VQSNSHDTSSKTTAD. Transmembrane regions (helical) follow at residues 80–100, 122–142, 146–166, 177–197, 214–234, 272–292, and 612–632; these read VPAAAGWTVGVIATLSLLASV, FPDTNFAWSFVLALLAAALTA, IAWLVLLANMVLAAVVNAAEI, FGENLGFAVHVVAIVVLVLGY, AVWLAGAVVGIVASWGLVELF, AIFGLFGAFALIGAAIVLFLS, and VIPRVGVASVIAEGFLVLPFS. The segment at 664-1172 is lysine--tRNA ligase; the sequence is VSGLRQVGLT…TLPFPLAKPH (509 aa). A DNA-binding region (OB) is located at residues 726-804; that stretch reads VSVSGRIMRI…SLIVSGWRLI (79 aa). Mg(2+) is bound by residues aspartate 1084 and glutamate 1091.

The protein in the N-terminal section; belongs to the LPG synthetase family. It in the C-terminal section; belongs to the class-II aminoacyl-tRNA synthetase family. The cofactor is Mg(2+).

It is found in the cell membrane. It catalyses the reaction tRNA(Lys) + L-lysine + ATP = L-lysyl-tRNA(Lys) + AMP + diphosphate. The enzyme catalyses L-lysyl-tRNA(Lys) + a 1,2-diacyl-sn-glycero-3-phospho-(1'-sn-glycerol) = a 1,2-diacyl-sn-glycero-3-phospho-1'-(3'-O-L-lysyl)-sn-glycerol + tRNA(Lys). Functionally, catalyzes the production of L-lysyl-tRNA(Lys)transfer and the transfer of a lysyl group from L-lysyl-tRNA(Lys) to membrane-bound phosphatidylglycerol (PG), which produces lysylphosphatidylglycerol (LPG), one of the components of the bacterial membrane with a positive net charge. LPG synthesis contributes to the resistance to cationic antimicrobial peptides (CAMPs) and likely protects M.tuberculosis against the CAMPs produced by competiting microorganisms (bacteriocins). In fact, the modification of anionic phosphatidylglycerol with positively charged L-lysine results in repulsion of the peptides. This Mycobacterium bovis (strain ATCC BAA-935 / AF2122/97) protein is Lysylphosphatidylglycerol biosynthesis bifunctional protein LysX (lysX).